A 192-amino-acid polypeptide reads, in one-letter code: NADH dehydrogenase [ubiquinone] iron-sulfur protein 3 (192 aa).

It belongs to the complex I 30 kDa subunit family. In terms of assembly, complex I is composed of about 45 different subunits. This is a component of the iron-sulfur (IP) fragment of the enzyme.

Its subcellular location is the mitochondrion inner membrane. The catalysed reaction is a ubiquinone + NADH + 5 H(+)(in) = a ubiquinol + NAD(+) + 4 H(+)(out). Core subunit of the mitochondrial membrane respiratory chain NADH dehydrogenase (Complex I) that is believed to belong to the minimal assembly required for catalysis. Complex I functions in the transfer of electrons from NADH to the respiratory chain. The immediate electron acceptor for the enzyme is believed to be ubiquinone. The polypeptide is NADH dehydrogenase [ubiquinone] iron-sulfur protein 3 (NAD9) (Beta trigyna (Caucasian wild beet)).